We begin with the raw amino-acid sequence, 324 residues long: Serpentine receptor class gamma-10 (324 aa).

A run of 8 helical transmembrane segments spans residues 39–59 (SSYLIVGAVLNVMIVYTVFHG), 69–89 (MLYCADAIVGIYINTAEVIFG), 91–111 (IFIYITPLCPIASPYFFTPSI), 128–146 (TFSQIFMSFNRMTCVIFLM), 155–175 (ILKPVLIITFILPLGVIWKIL), 206–226 (LFHFTLCFVLVIIFFVATILG), 246–266 (MIMAVQTVTFASIQIYFVFFA), and 279–299 (IVSFVFDSLYVFSPIALIVMS).

The protein belongs to the nematode receptor-like protein srg family.

The protein localises to the membrane. In Caenorhabditis elegans, this protein is Serpentine receptor class gamma-10 (srg-10).